The primary structure comprises 1357 residues: DNA-directed RNA polymerase subunit beta (1357 aa).

The protein belongs to the RNA polymerase beta chain family. The RNAP catalytic core consists of 2 alpha, 1 beta, 1 beta' and 1 omega subunit. When a sigma factor is associated with the core the holoenzyme is formed, which can initiate transcription.

It carries out the reaction RNA(n) + a ribonucleoside 5'-triphosphate = RNA(n+1) + diphosphate. Functionally, DNA-dependent RNA polymerase catalyzes the transcription of DNA into RNA using the four ribonucleoside triphosphates as substrates. This chain is DNA-directed RNA polymerase subunit beta, found in Neorickettsia sennetsu (Ehrlichia sennetsu).